Consider the following 236-residue polypeptide: 3-deoxy-D-manno-octulosonic acid kinase (236 aa).

The active site involves D167.

The protein belongs to the protein kinase superfamily. KdkA/RfaP family.

It is found in the cell inner membrane. It carries out the reaction an alpha-Kdo-(2-&gt;6)-lipid IVA + ATP = a 4-O-phospho-alpha-Kdo-(2-&gt;6)-lipid IVA + ADP + H(+). It functions in the pathway bacterial outer membrane biogenesis; LPS core biosynthesis. Catalyzes the ATP-dependent phosphorylation of the 3-deoxy-D-manno-octulosonic acid (Kdo) residue in Kdo-lipid IV(A) at the 4-OH position. This chain is 3-deoxy-D-manno-octulosonic acid kinase, found in Vibrio vulnificus (strain YJ016).